Here is a 421-residue protein sequence, read N- to C-terminus: Proton/sodium-glutamate symport protein (421 aa).

Residues 1–3 (MRK) lie on the Cytoplasmic side of the membrane. The chain crosses the membrane as a helical span at residues 4–24 (IGLAWQIFIGLILGIIVGAIF). The Extracellular portion of the chain corresponds to 25-43 (YGNPKVATYLQPIGDIFLR). A helical transmembrane segment spans residues 44–64 (LIKMIVIPIVISSLVVGVASV). At 65-77 (GDLKKLGKLGGKT) the chain is on the cytoplasmic side. Residues 78-98 (IIYFEIITTIAIVVGLLAANI) form a helical membrane-spanning segment. Residues 99-148 (FQPGTGVNMKSLEKTDIQSYVDTTNEVQHHSMVETFVNIVPKNIFESLTK) are Extracellular-facing. Residues 149-169 (GDMLPIIFFSVMFGLGVAAIG) traverse the membrane as a helical segment. Topologically, residues 170–198 (EKGKPVLQFFQGTAEAMFYVTNQIMKFAP) are cytoplasmic. The helical transmembrane segment at 199–219 (FGVFALIGVTVSKFGVESLIP) threads the bilayer. Residues 220–222 (LSK) lie on the Extracellular side of the membrane. Residues 223–243 (LVIVVYATMVFFIFVVLGGVA) form a helical membrane-spanning segment. Residue Lys-244 is a topological domain, cytoplasmic. Residues 245-265 (LFGINIFHIIKILKDELILAY) form a helical membrane-spanning segment. Residues 266 to 306 (STASSETVLPKIMEKMENFGCPKAITSFVIPTGYSFNLDGS) lie on the Extracellular side of the membrane. Residues 307 to 327 (TLYQALAAIFIAQLYGIDMPI) traverse the membrane as a helical segment. The Cytoplasmic segment spans residues 328 to 330 (SQQ). 2 consecutive transmembrane segments (helical) span residues 331–351 (ISLL…PGVS) and 352–372 (FVVL…LAFI). At 373 to 421 (AGIDRILDMARTAVNVIGNSLAAIIMSKWEGQYNEEKGKQYIAQLQQSA) the chain is on the cytoplasmic side.

The protein belongs to the dicarboxylate/amino acid:cation symporter (DAACS) (TC 2.A.23) family. As to quaternary structure, homotrimer.

It localises to the cell membrane. Its function is as follows. This carrier protein is part of the Na(+)-dependent, binding-protein-independent glutamate-aspartate transport system. The chain is Proton/sodium-glutamate symport protein (gltT) from Geobacillus stearothermophilus (Bacillus stearothermophilus).